Reading from the N-terminus, the 1955-residue chain is Protocadherin-15 (1955 aa).

A signal peptide spans 1 to 26 (MFRQFYLWTCLASGIILGSLFEICLG). Residues 27–1376 (QYDDDCKLAR…GESLGYTEGA (1350 aa)) are Extracellular-facing. The cysteines at positions 32 and 120 are disulfide-linked. Cadherin domains follow at residues 40 to 147 (PATI…SPTF), 148 to 265 (KHES…GPMF), 278 to 395 (RPLT…SPYF), 396 to 509 (TMPS…TPTF), 510 to 616 (PEIS…PPRF), 617 to 717 (PQLM…APVF), 719 to 819 (PYLP…SPVF), 820 to 926 (TNST…PPVF), 927 to 1035 (SKRI…IPRF), 1037 to 1144 (QEEY…PPVF), and 1145 to 1259 (QKKF…PPTL). N52, N97, and N201 each carry an N-linked (GlcNAc...) asparagine glycan. Residues N419, N559, N662, N724, N768, N821, and N851 are each glycosylated (N-linked (GlcNAc...) asparagine). N-linked (GlcNAc...) asparagine glycans are attached at residues N1064, N1084, and N1175. A helical membrane pass occupies residues 1377 to 1397 (LLALAFIIILCCIPAILVVLV). Residues 1398–1955 (SYRQFKVRQA…KQSHSQSTSL (558 aa)) lie on the Cytoplasmic side of the membrane. Residues 1426–1444 (VPAPAPVAAPPPPPPPPPG) show a composition bias toward pro residues. Disordered stretches follow at residues 1426–1446 (VPAP…PGAH), 1601–1623 (QGTR…GSSN), 1745–1766 (CPLP…APLA), and 1928–1955 (ITSE…STSL). The span at 1928 to 1941 (ITSEQNKGSLNNIV) shows a compositional bias: polar residues.

In terms of assembly, antiparallel heterodimer with CDH23. Found in a complex with TMIE and LHFPL5. Interacts with LHFPL5/TMHS; this interaction is required for efficient localization to hair bundles. Interacts with MYO7A. Interacts with USH1G; this interaction may recruit USH1G to the plasma membrane. Interacts with TOMT. Isoforms CD1 and CD3 interact with TMC1 (via N-terminus) and TMC2 (via N-terminus). Expressed in brain, lung, kidney, spleen and testis. Found also in the inner and outer synaptic layers, and the nerve fiber layer in adult and fetal retinas. Found in the supporting cells, outer sulcus cells and spiral ganglion of fetal cochlea. Expressed in cytotoxic tumor-derived T- and NK-cell lines as well as biopsies of nasal NK/T-cell lymphomas. Not detected in normal or in vitro activated peripheral blood cells, CD4 or CD8 lymphocytes or NK cells. Isoform 3 is expressed in brain, heart, cerebellum and kidney. CD1 isoforms, such as isoform 1, have a limited pattern of expression and is detected in testis, retina and cochlea. CD2 isoforms, such as isoforms 4 and 5, are expressed in heart, kidney, thymus, spleen, testis, retina and cochlea. CD3 isoforms, such as isoform 6, are widely expressed.

The protein localises to the cell membrane. It localises to the secreted. Its function is as follows. Calcium-dependent cell-adhesion protein. Essential for maintenance of normal retinal and cochlear function. The protein is Protocadherin-15 (PCDH15) of Homo sapiens (Human).